Here is a 227-residue protein sequence, read N- to C-terminus: Cytidylate kinase (227 aa).

Position 12–20 (12–20 (GPSGAGKGT)) interacts with ATP.

The protein belongs to the cytidylate kinase family. Type 1 subfamily.

Its subcellular location is the cytoplasm. The catalysed reaction is CMP + ATP = CDP + ADP. It carries out the reaction dCMP + ATP = dCDP + ADP. In Xanthomonas axonopodis pv. citri (strain 306), this protein is Cytidylate kinase.